The sequence spans 153 residues: Endoribonuclease YbeY (153 aa).

Zn(2+) is bound by residues His-116, His-120, and His-126.

It belongs to the endoribonuclease YbeY family. Zn(2+) serves as cofactor.

It localises to the cytoplasm. In terms of biological role, single strand-specific metallo-endoribonuclease involved in late-stage 70S ribosome quality control and in maturation of the 3' terminus of the 16S rRNA. The chain is Endoribonuclease YbeY from Leifsonia xyli subsp. xyli (strain CTCB07).